A 207-amino-acid chain; its full sequence is Uracil phosphoribosyltransferase (207 aa).

5-phospho-alpha-D-ribose 1-diphosphate is bound by residues arginine 77, arginine 102, and 129-137; that span reads DPMLATGGS. Uracil-binding positions include isoleucine 192 and 197–199; that span reads GDA. Position 198 (aspartate 198) interacts with 5-phospho-alpha-D-ribose 1-diphosphate.

Belongs to the UPRTase family. Mg(2+) serves as cofactor.

The enzyme catalyses UMP + diphosphate = 5-phospho-alpha-D-ribose 1-diphosphate + uracil. It participates in pyrimidine metabolism; UMP biosynthesis via salvage pathway; UMP from uracil: step 1/1. With respect to regulation, allosterically activated by GTP. In terms of biological role, catalyzes the conversion of uracil and 5-phospho-alpha-D-ribose 1-diphosphate (PRPP) to UMP and diphosphate. This chain is Uracil phosphoribosyltransferase, found in Mycoplasma mycoides subsp. mycoides SC (strain CCUG 32753 / NCTC 10114 / PG1).